A 525-amino-acid chain; its full sequence is Tigger transposable element-derived protein 2 (525 aa).

The HTH psq-type domain occupies 1–52 (MLGKRKRVVLTIKDKLDIIKKLEEGNSFKKLSVLYGIGESTVRDIKKNKERI). 2 consecutive DNA-binding regions (H-T-H motif) follow at residues 28-48 (FKKLSVLYGIGESTVRDIKKN) and 100-132 (TICAKQARFFFDALGMEGDFNASSGWLTRFKQR). Residues 67–139 (KRKSMKSSTY…KQRHGIPKAA (73 aa)) form the HTH CENPB-type domain. A DDE-1 domain is found at 168–385 (LLPEQIYGAD…IRSNTITRAW (218 aa)).

The protein belongs to the tigger transposable element derived protein family.

The protein resides in the nucleus. The protein is Tigger transposable element-derived protein 2 (Tigd2) of Mus musculus (Mouse).